The following is a 78-amino-acid chain: MSEIASRVKAIIVDKLGVEESEVTETASFTNDLGADSLDTVELIMEFEKEFGISIPDDQAEKIGTVQDAVAYIEEHAK.

The Carrier domain maps to 2–77 (SEIASRVKAI…DAVAYIEEHA (76 aa)). An O-(pantetheine 4'-phosphoryl)serine modification is found at Ser-37.

Belongs to the acyl carrier protein (ACP) family. In terms of processing, 4'-phosphopantetheine is transferred from CoA to a specific serine of apo-ACP by AcpS. This modification is essential for activity because fatty acids are bound in thioester linkage to the sulfhydryl of the prosthetic group.

The protein localises to the cytoplasm. It functions in the pathway lipid metabolism; fatty acid biosynthesis. Carrier of the growing fatty acid chain in fatty acid biosynthesis. The polypeptide is Acyl carrier protein (Bacteroides fragilis (strain ATCC 25285 / DSM 2151 / CCUG 4856 / JCM 11019 / LMG 10263 / NCTC 9343 / Onslow / VPI 2553 / EN-2)).